The primary structure comprises 148 residues: Large ribosomal subunit protein bL9 (148 aa).

Belongs to the bacterial ribosomal protein bL9 family.

Binds to the 23S rRNA. This Bacillus mycoides (strain KBAB4) (Bacillus weihenstephanensis) protein is Large ribosomal subunit protein bL9.